We begin with the raw amino-acid sequence, 153 residues long: Transcriptional repressor NrdR (153 aa).

A disordered region spans residues 1 to 22 (MRCPACHHNGTRVLDSRPAHEG). A zinc finger spans residues 3-34 (CPACHHNGTRVLDSRPAHEGRSIRRRRECESC). Positions 49–139 (LIVVKKDGTR…VYRQFKDINV (91 aa)) constitute an ATP-cone domain.

Belongs to the NrdR family. Zn(2+) serves as cofactor.

In terms of biological role, negatively regulates transcription of bacterial ribonucleotide reductase nrd genes and operons by binding to NrdR-boxes. The protein is Transcriptional repressor NrdR of Halalkalibacterium halodurans (strain ATCC BAA-125 / DSM 18197 / FERM 7344 / JCM 9153 / C-125) (Bacillus halodurans).